Reading from the N-terminus, the 1830-residue chain is MENNNLGLRFRKLPRQPLALPKLDPLLDENLEQWPHLNQLVQCYGTEWVKDVNKYGHYENIRPDSFQTQIFEGPDTDTETEIRLASARSATIEEDVASISGRPFSDPGSSKHFGQPPLPAYEPAFDWENERAMIFGQRTPESPAASYSSGLKISVRVLSLAFQSGLVEPFFGSIALYNQERKEKLSEDFYFQIQPTEMQDAKLSSENRGVFYLDAPSASVCLLIQLEKTATEEGGVTSSVYSRKEPVHLTEREKQKLQVWSRIMPYRESFAWAVVPLFDNNLTTNTGESASPSSPLAPSMTASSSHDGVYEPIAKITSDGKQGYSGGSSVVVEISNLNKVKESYSEESIQDPKRKVHKPVKGVLRLEIEKHRNGHGDFEDLSENGSIINDSLDPTDRLSDLTLMKCPSSSSGGPRNGCSKWNSEDAKDVSRNLTSSCGTPDLNCYHAFDFCSTTRNEPFLHLFHCLYVYPVAVTLSRKRNPFIRVELRKDDTDIRKQPLEAIYPREPGVSLQKWVHTQVAVGARAASYHDEIKVSLPATWTPSHHLLFTFFHVDLQTKLEAPRPVVVGYASLPLSTYIHSRSDISLPVMRELVPHYLQESTKERLDYLEDGKNIFKLRLRLCSSLYPTNERVRDFCLEYDRHTLQTRPPWGSELLQAINSLKHVDSTALLQFLYPILNMLLHLIGNGGETLQVAAFRAMVDILTRVQQVSFDDADRNRFLVTYVDYSFDDFGGNQPPVYPGLATVWGSLARSKAKGYRVGPVYDDVLSMAWFFLELIVKSMALEQARLYDHNLPTGEDVPPMQLKESVFRCIMQLFDCLLTEVHERCKKGLSLAKRLNSSLAFFCYDLLYIIEPCQVYELVSLYMDKFSGVCQSVLHECKLTFLQIISDHDLFVEMPGRDPSDRNYLSSILIQELFLSLDHDELPLRAKGARILVILLCKHEFDARYQKAEDKLYIAQLYFPFVGQILDEMPVFYNLNATEKREVLIGVLQIVRNLDDTSLVKAWQQSIARTRLYFKLMEECLILFEHKKAADSILGGNNSRGPVSEGAGSPKYSERLSPAINNYLSEASRQEVRLEGTPDNGYLWQRVNSQLASPSQPYSLREALAQAQSSRIGASAQALRESLHPILRQKLELWEENVSATVSLQVLEITENFSSMAASHNIATDYGKLDCITTILTSFFSRNQSLAFWKAFFPIFNRIFDLHGATLMARENDRFLKQIAFHLLRLAVYRNDSVRKRAVIGLQILVKSSLYFMQTARLRALLTITLSELMSDVQVTHMKSDNTLEESGEARRLQQSLSEMADEAKSVNLLRECGLPDDTLLIIPEKFTENRWSWAEVKHLSDSLVLALDASLGHALLGSVMAMDRYAAAESFYKLGMAFAPVPDLHIMWLLHLCDAHQEMQSWAEAAQCAVAVAGVIMQALVARNDGVWSKDHVSALRKICPMVSGEFTTEASAAEVEGYGASKLTVDSAVKYLQLANKLFSQAELYHFCASILELVIPVYKSRKAYGQLAKCHTLLTNIYESILDQESNPIPFIDATYYRVGFYGEKFGKLDRKEYVYREPRDVRLGDIMEKLSHIYESRMDSNHILHIIPDSRQVKAEDLQAGVCYLQITAVDAVMEDEDLGSRRERIFSLSTGSVRARVFDRFLFDTPFTKNGKTQGGLEDQWKRRTVLQTEGSFPALVNRLLVTKSESLEFSPVENAIGMIETRTTALRNELEEPRSSDGDHLPRLQSLQRILQGSVAVQVNSGVLSVCTAFLSGEPATRLRSQELQQLIAALLEFMAVCKRAIRVHFRLIGEEDQEFHTQLVNGFQSLTAELSHYIPAILSEL.

N-acetylmethionine is present on Met-1. Residues 285–304 (NTGESASPSSPLAPSMTASS) are disordered. Low complexity predominate over residues 289 to 304 (SASPSSPLAPSMTASS). In terms of domain architecture, C2 DOCK-type spans 463-622 (FHCLYVYPVA…NIFKLRLRLC (160 aa)). At Ser-1051 the chain carries Phosphoserine. Thr-1079 carries the phosphothreonine modification. Ser-1095 is modified (phosphoserine). A DOCKER domain is found at 1379 to 1828 (MAFAPVPDLH…LSHYIPAILS (450 aa)).

It belongs to the DOCK family. As to quaternary structure, homodimer. Component of SCAR/WAVE and ARP2/3 complexes. Interacts directly with ARAC4/ROP2, ARAC1/ROP3, ARAC5/ROP4, ARAC6/ROP5, ARAC8/ROP10, ARAC9/ROP8, SCAR1, SCAR2, SCAR3, SCAR4, ABI1, ABI2, ABI3 and ABI4. Binds to the inactive GDP-bound form of ARAC3/ROP6. Expressed ubiquitously, in roots and aerial organs.

The protein resides in the cytoplasm. Its subcellular location is the endoplasmic reticulum membrane. It localises to the nucleus. Functionally, guanine nucleotide exchange factor (GEF) for Rho and Rac. GEF proteins activate small GTPases by exchanging bound GDP for free GTP. Controls actin polymerization via the two heteromeric complexes WAVE and actin-related protein (ARP) 2/3. Involved in cytoskeletal reorganization required for cell shape (e.g. trichome and cotyledon) control and tissue development. Prevents cortical microtubules organization into parallel arrays oriented perpendicular to the axis of cell elongation to limit anisotropic cell growth during petal development, probably by triggering ARAC4/ROP2 and ARAC3/ROP6 activity. Promotes polarized growth and cell-cell adhesion in the leaf epidermis probably by promoting the formation of endoplasmic reticulum (ER) exit site (ERES) and/or trafficking between the ER and Golgi. Triggers ARAC3/ROP6 activation required for auxin-mediated inhibition of PIN2 internalization during gravitropic responses (, PubMed:22683260). In Arabidopsis thaliana (Mouse-ear cress), this protein is Guanine nucleotide exchange factor SPIKE 1.